A 209-amino-acid polypeptide reads, in one-letter code: MAKLYFYYSAMNAGKTTTLLQSAHNYRERGMRTLILTPKLDHRAGSGVVASRIGLRADGRIFERDTGLQQLVERDIHNDGALHCVLVDEAQFLSRAQVWQLSEVVDRLRVPVLCYGLRTDFRGELFEGSQFLLAWADELEEIKTICHSGSKATMTVRVDAQGHAVQDGPQVEIGGNERYVSVSRAEFKKIMRGEGRIDPLQIALPLPVA.

ATP-binding positions include 9 to 16 (SAMNAGKT) and 88 to 91 (DEAQ). Glutamate 89 functions as the Proton acceptor in the catalytic mechanism.

Belongs to the thymidine kinase family. Homotetramer.

It localises to the cytoplasm. The catalysed reaction is thymidine + ATP = dTMP + ADP + H(+). The chain is Thymidine kinase from Xanthomonas oryzae pv. oryzae (strain MAFF 311018).